We begin with the raw amino-acid sequence, 20 residues long: Antiviral protein Y3 (20 aa).

This Pleurotus citrinopileatus (Golden oyster mushroom) protein is Antiviral protein Y3.